We begin with the raw amino-acid sequence, 504 residues long: Sucrose phosphorylase (504 aa).

Aspartate 50 provides a ligand contact to substrate. Residues histidine 88, 190 to 192 (RLD), glutamate 232, 289 to 290 (HD), 342 to 345 (DLYQ), and arginine 399 each bind sucrose. The Nucleophile role is filled by aspartate 192. The active-site Proton donor is the glutamate 232.

This sequence belongs to the glycosyl hydrolase 13 family. Sucrose phosphorylase subfamily. Homodimer.

It carries out the reaction sucrose + phosphate = D-fructose + alpha-D-glucose 1-phosphate. In terms of biological role, catalyzes the reversible phosphorolysis of sucrose into alpha-D-glucose 1-phosphate (Glc1P) and D-fructose. Is involved in sucrose degradation. Also displays transglucosylation activity in vitro, by transferring the glucosyl moiety of Glc1P to a broad range of monomeric sugars, such as D- and L-arabinose, D- and L-arabitol, and xylitol. This chain is Sucrose phosphorylase, found in Bifidobacterium adolescentis (strain ATCC 15703 / DSM 20083 / NCTC 11814 / E194a).